The following is a 64-amino-acid chain: Disintegrin schistatin (64 aa).

The Disintegrin domain maps to 1–64; sequence NSVHPCCDPV…PDCPRNRYNV (64 aa). Intrachain disulfides connect C6-C29, C20-C26, C25-C50, and C38-C57. Positions 42–44 match the Cell attachment site motif; it reads RGD.

The protein belongs to the disintegrin family. Dimeric disintegrin subfamily. Homodimer; disulfide-linked. In terms of tissue distribution, expressed by the venom gland.

The protein resides in the secreted. Its function is as follows. May bind to both alpha-IIb/beta-3 (ITGA2B/ITGB3) and alpha-V/beta-3 (ITGAV/ITGB3) integrins, and may inhibit platelet aggregation. The polypeptide is Disintegrin schistatin (Echis carinatus (Saw-scaled viper)).